The sequence spans 364 residues: PqqA peptide cyclase (364 aa).

One can recognise a Radical SAM core domain in the interval 6-222 (VGAPAGMLIE…HARTRYAGGP (217 aa)). 3 residues coordinate [4Fe-4S] cluster: Cys20, Cys24, and Cys27.

Belongs to the radical SAM superfamily. PqqE family. In terms of assembly, interacts with PqqD. The interaction is necessary for activity of PqqE. The cofactor is [4Fe-4S] cluster.

It catalyses the reaction [PQQ precursor protein] + S-adenosyl-L-methionine = E-Y cross-linked-[PQQ precursor protein] + 5'-deoxyadenosine + L-methionine + H(+). Its pathway is cofactor biosynthesis; pyrroloquinoline quinone biosynthesis. Catalyzes the cross-linking of a glutamate residue and a tyrosine residue in the PqqA protein as part of the biosynthesis of pyrroloquinoline quinone (PQQ). The sequence is that of PqqA peptide cyclase from Streptomyces rochei (Streptomyces parvullus).